The chain runs to 998 residues: Poly [ADP-ribose] polymerase 1 (998 aa).

2 consecutive PARP-type zinc fingers follow at residues 1–78 and 99–189; these read AKSG…ETGG and FAAE…PAVK. Zn(2+) is bound by residues cysteine 8, cysteine 11, histidine 40, cysteine 43, cysteine 111, cysteine 114, histidine 145, and cysteine 148. The disordered stretch occupies residues 185 to 211; the sequence is LPAVKNEGKRKADEVDGHSAATKKKIK. The span at 190–201 shows a compositional bias: basic and acidic residues; that stretch reads NEGKRKADEVDG. Short sequence motifs (nuclear localization signal) lie at residues 193-195 and 207-212; these read KRK and KKKIKK. A PADR1 zinc-binding domain is found at 211 to 345; that stretch reads KKEKEKESKL…FKRHDRAFPP (135 aa). The segment at 276–318 is zinc ribbon; it reads GALLPCEECSGQFVFKGDAYYCTGDLSAWTKCVAKTQTPNRKD. Zn(2+) contacts are provided by cysteine 281, cysteine 284, cysteine 297, and cysteine 307. Pro residues predominate over residues 348-361; sequence APTPISPPAAPEPK. Residues 348–370 are disordered; the sequence is APTPISPPAAPEPKPTVEETFPE. An automodification domain region spans residues 357-507; it reads APEPKPTVEE…GSNKSEKKMK (151 aa). In terms of domain architecture, BRCT spans 369-460; sequence PEGKPLTNTK…SVQELLSQFG (92 aa). Residues glutamate 391, glutamate 397, glutamate 419, glutamate 428, glutamate 429, glutamate 445, glutamate 447, glutamate 454, glutamate 467, glutamate 471, glutamate 477, glutamate 495, glutamate 496, and glutamate 503 each carry the polyADP-ribosyl glutamic acid modification. The tract at residues 471–510 is disordered; the sequence is EAVQPTEKQPSSGPVAGKSSGKVKEEKGSNKSEKKMKLTV. Basic and acidic residues predominate over residues 492–506; that stretch reads KVKEEKGSNKSEKKM. The WGR domain occupies 525–621; that stretch reads SCHVLETGGK…PNFTKYPKKF (97 aa). Residues 645-762 enclose the PARP alpha-helical domain; sequence KSKLAKPVQE…DIEVAYSLLR (118 aa). The PARP catalytic domain maps to 771 to 997; that stretch reads DPIDVKYEKI…LKFNYKGGMM (227 aa). NAD(+) is bound by residues 845-847, glycine 854, arginine 861, and serine 887; that span reads HGS. Glutamate 971 (for poly [ADP-ribose] polymerase activity) is an active-site residue.

This sequence belongs to the ARTD/PARP family. Homodimer; PARP-type zinc-fingers from separate parp1 molecules form a dimer module that specifically recognizes DNA strand breaks. In terms of processing, poly-ADP-ribosylated on serine, glutamate and aspartate residues by autocatalysis. Auto-ADP-ribosylation on serine takes place following interaction with HPF1. Auto poly-ADP-ribosylation on serine residues promotes its dissociation from chromatin.

The protein localises to the chromosome. It localises to the nucleus. The protein resides in the nucleolus. Its subcellular location is the cytoplasm. It is found in the cytosol. It catalyses the reaction NAD(+) + (ADP-D-ribosyl)n-acceptor = nicotinamide + (ADP-D-ribosyl)n+1-acceptor + H(+).. It carries out the reaction L-seryl-[protein] + NAD(+) = O-(ADP-D-ribosyl)-L-seryl-[protein] + nicotinamide + H(+). The catalysed reaction is L-aspartyl-[protein] + NAD(+) = 4-O-(ADP-D-ribosyl)-L-aspartyl-[protein] + nicotinamide. The enzyme catalyses L-glutamyl-[protein] + NAD(+) = 5-O-(ADP-D-ribosyl)-L-glutamyl-[protein] + nicotinamide. It catalyses the reaction L-tyrosyl-[protein] + NAD(+) = O-(ADP-D-ribosyl)-L-tyrosyl-[protein] + nicotinamide + H(+). It carries out the reaction L-histidyl-[protein] + NAD(+) = N(tele)-(ADP-D-ribosyl)-L-histidyl-[protein] + nicotinamide + H(+). ADP-ribosyltransferase activity is regulated via an allosteric activation mechanism. In absence of activation signal, parp1 is autoinhibited by the PARP alpha-helical domain (also named HD region), which prevents effective NAD(+)-binding. Activity is highly stimulated by signals, such as DNA strand breaks. Binding to damaged DNA unfolds the PARP alpha-helical domain, relieving autoinhibition. Poly-ADP-ribosyltransferase activity is tightly regulated and parp1 is removed from damaged chromatin following initial poly-ADP-ribosylation of chromatin to avoid prolonged residence (trapping) that has cytotoxic consequences. A number of factors or post-translational modifications (auto-poly-ADP-ribosylation) promote parp1 removal from chromatin. Functionally, poly-ADP-ribosyltransferase that mediates poly-ADP-ribosylation of proteins and plays a key role in DNA repair. Mediates glutamate, aspartate, serine, histidine or tyrosine ADP-ribosylation of proteins: the ADP-D-ribosyl group of NAD(+) is transferred to the acceptor carboxyl group of target residues and further ADP-ribosyl groups are transferred to the 2'-position of the terminal adenosine moiety, building up a polymer with an average chain length of 20-30 units. Serine ADP-ribosylation of proteins constitutes the primary form of ADP-ribosylation of proteins in response to DNA damage. Specificity for the different amino acids is conferred by interacting factors, such as hpf1 and nmnat1. Following interaction with hpf1, catalyzes serine ADP-ribosylation of target proteins; hpf1 confers serine specificity by completing the parp1 active site. Also catalyzes tyrosine ADP-ribosylation of target proteins following interaction with hpf1. Following interaction with nmnat1, catalyzes glutamate and aspartate ADP-ribosylation of target proteins; nmnat1 confers glutamate and aspartate specificity. Parp1 initiates the repair of DNA breaks: recognizes and binds DNA breaks within chromatin and recruits hpf1, licensing serine ADP-ribosylation of target proteins, such as histones (H2BS6ADPr and H3S10ADPr), thereby promoting decompaction of chromatin and the recruitment of repair factors leading to the reparation of DNA strand breaks. In addition to base excision repair (BER) pathway, also involved in double-strand breaks (DSBs) repair. Mediates the poly-ADP-ribosylation of a number of proteins. In addition to proteins, also able to ADP-ribosylate DNA: catalyzes ADP-ribosylation of DNA strand break termini containing terminal phosphates and a 2'-OH group in single- and double-stranded DNA, respectively. Parp1-mediated DNA repair in neurons plays a role in sleep: senses DNA damage in neurons and promotes sleep, facilitating efficient DNA repair. In addition to DNA repair, also involved in other processes, such as transcription regulation, programmed cell death, membrane repair, adipogenesis and innate immunity. Acts as a repressor of transcription: binds to nucleosomes and modulates chromatin structure in a manner similar to histone H1, thereby altering RNA polymerase II. Acts both as a positive and negative regulator of transcription elongation, depending on the context. Poly-ADP-ribose chains generated by parp1 also play a role in poly-ADP-ribose-dependent cell death, a process named parthanatos. Also acts as a negative regulator of the cGAS-STING pathway by mediating poly-ADP-ribosylation and inactivation of cgas. Acts as a negative regulator of adipogenesis by catalyzing poly ADP-ribosylation of histone H2B on 'Glu-35' (H2BE35ADPr). This chain is Poly [ADP-ribose] polymerase 1 (parp1), found in Xenopus laevis (African clawed frog).